The chain runs to 519 residues: Flavin-dependent halogenase rdc2 (519 aa).

The N-terminal stretch at 1 to 21 (MSVPKSCTILVAGGGPAGSYA) is a signal peptide. Gly-14, Ala-17, and Glu-47 together coordinate FAD. Residues Ser-324 and Gly-325 each coordinate chloride.

It belongs to the flavin-dependent halogenase family.

The protein operates within secondary metabolite biosynthesis. Functionally, flavin-dependent halogenase; part of the gene cluster that mediates the biosynthesis of radicicol, a resorcylic acid lactone (RAL) that irreversibly inhibits the HSP90 molecular chaperone, an important target for cancer chemotherapy. Within the cluster, rdc2 is involved in the chlorination of the resorcylic acid lactone (RAL) structure to convert monocillin I into radicicol. Also chlorinates monocillin II to produce 6-cholomonocillin II and monocilllin IV to produce 13-chloromonocillin IV. In contrast to most fungal halogenases, rdc2 has a broad substrate specificity and can accept a variety of macrolactones as the substrates to generate chlorinated derivatives, including dihydroresorcylide, zearalenone, curvularin, or even curcumin. Rdc2 is able to dichlorinate dihydroresorcylide and monocillin IV. Dihydroresorcylide is first chlorinated at position 11 to produce 11-chlorodihydroresorcylide which can be further chlorinated by rdc2 at possition 13. Mororeover, rdc2 can incorporate bromine into dihydroresorcylide to yield the corresponding mono- and di-brominated derivatives. Finally, rdc2 is also able to halogenate the isoquinolines 4-hydroxyisoquinoline and 6-hydroxyisoquinoline into 3-chloro-4-hydroxyisoquinoline and 5-chloro-6-hydroxyisoquinoline, respectively. The radicicol cluster encodes only two apparent post-PKS enzymes, a cytochrome P450 monooxygenase (rdc4) and a non-heme halogenase (rdc2) that could introduce the epoxide and the chlorine, respectively. If this cluster includes all the genes required for radicicol biosynthesis, the remaining structural features of radicicol are presumably generated by the PKSs rdc1 and rdc5. The C-2' ketone could arise if the R-PKS rdc5 and NR-PKS rdc1 each carry out four iterations, in contrast to the five iteration-three iteration split for the hypothemycin PKSs. The origin of the cis 5',6' double bond is not known. The radicicol R-PKS rdc5 ER domain may catalyze either double bond isomerization or reduction in the third iteration. This Metacordyceps chlamydosporia (Nematophagous fungus) protein is Flavin-dependent halogenase rdc2.